The sequence spans 459 residues: Cysteine--tRNA ligase (459 aa).

Cys-28 serves as a coordination point for Zn(2+). The short motif at 30-40 (VTVYDLCHIGH) is the 'HIGH' region element. 3 residues coordinate Zn(2+): Cys-209, His-234, and Glu-238. Positions 266 to 270 (KMSKS) match the 'KMSKS' region motif. ATP is bound at residue Lys-269.

It belongs to the class-I aminoacyl-tRNA synthetase family. Monomer. Zn(2+) serves as cofactor.

It is found in the cytoplasm. The catalysed reaction is tRNA(Cys) + L-cysteine + ATP = L-cysteinyl-tRNA(Cys) + AMP + diphosphate. This is Cysteine--tRNA ligase from Haemophilus influenzae (strain 86-028NP).